The primary structure comprises 469 residues: Aspartyl/glutamyl-tRNA(Asn/Gln) amidotransferase subunit B (469 aa).

It belongs to the GatB/GatE family. GatB subfamily. Heterotrimer of A, B and C subunits.

It carries out the reaction L-glutamyl-tRNA(Gln) + L-glutamine + ATP + H2O = L-glutaminyl-tRNA(Gln) + L-glutamate + ADP + phosphate + H(+). The enzyme catalyses L-aspartyl-tRNA(Asn) + L-glutamine + ATP + H2O = L-asparaginyl-tRNA(Asn) + L-glutamate + ADP + phosphate + 2 H(+). In terms of biological role, allows the formation of correctly charged Asn-tRNA(Asn) or Gln-tRNA(Gln) through the transamidation of misacylated Asp-tRNA(Asn) or Glu-tRNA(Gln) in organisms which lack either or both of asparaginyl-tRNA or glutaminyl-tRNA synthetases. The reaction takes place in the presence of glutamine and ATP through an activated phospho-Asp-tRNA(Asn) or phospho-Glu-tRNA(Gln). This Thermus thermophilus (strain ATCC BAA-163 / DSM 7039 / HB27) protein is Aspartyl/glutamyl-tRNA(Asn/Gln) amidotransferase subunit B.